A 131-amino-acid chain; its full sequence is Small ribosomal subunit protein uS8 (131 aa).

The protein belongs to the universal ribosomal protein uS8 family. As to quaternary structure, part of the 30S ribosomal subunit. Contacts proteins S5 and S12.

In terms of biological role, one of the primary rRNA binding proteins, it binds directly to 16S rRNA central domain where it helps coordinate assembly of the platform of the 30S subunit. The protein is Small ribosomal subunit protein uS8 of Acinetobacter baylyi (strain ATCC 33305 / BD413 / ADP1).